We begin with the raw amino-acid sequence, 451 residues long: Tryptophan--tRNA ligase (451 aa).

ATP is bound by residues 10-12 and 18-19; these read TTT and GN. Residues 11 to 19 carry the 'HIGH' region motif; it reads TTGTPHLGN. L-tryptophan is bound at residue aspartate 143. ATP is bound by residues 155 to 157, leucine 195, and 202 to 206; these read GRD and KMSKS. The 'KMSKS' region signature appears at 202-206; sequence KMSKS.

This sequence belongs to the class-I aminoacyl-tRNA synthetase family. Homodimer.

It localises to the cytoplasm. The enzyme catalyses tRNA(Trp) + L-tryptophan + ATP = L-tryptophyl-tRNA(Trp) + AMP + diphosphate + H(+). Functionally, catalyzes the attachment of tryptophan to tRNA(Trp). This chain is Tryptophan--tRNA ligase, found in Bordetella pertussis (strain Tohama I / ATCC BAA-589 / NCTC 13251).